Reading from the N-terminus, the 307-residue chain is Malonyl-[acyl-carrier protein] O-methyltransferase (307 aa).

The protein belongs to the methyltransferase superfamily.

The catalysed reaction is malonyl-[ACP] + S-adenosyl-L-methionine = malonyl-[ACP] methyl ester + S-adenosyl-L-homocysteine. It participates in cofactor biosynthesis; biotin biosynthesis. Functionally, converts the free carboxyl group of a malonyl-thioester to its methyl ester by transfer of a methyl group from S-adenosyl-L-methionine (SAM). It allows to synthesize pimeloyl-ACP via the fatty acid synthetic pathway. The polypeptide is Malonyl-[acyl-carrier protein] O-methyltransferase (Nitrosospira multiformis (strain ATCC 25196 / NCIMB 11849 / C 71)).